Here is an 833-residue protein sequence, read N- to C-terminus: Protein translocase subunit SecA (833 aa).

ATP-binding positions include glutamine 87, 105–109 (GEGKT), and aspartate 494. Residues 789-816 (PAAVAYSGGEAEAGPAQPHREDPKVGRN) are disordered. A compositionally biased stretch (basic and acidic residues) spans 806-815 (PHREDPKVGR). Residues cysteine 819, cysteine 821, cysteine 830, and cysteine 831 each contribute to the Zn(2+) site.

Belongs to the SecA family. Monomer and homodimer. Part of the essential Sec protein translocation apparatus which comprises SecA, SecYEG and auxiliary proteins SecDF-YajC and YidC. Zn(2+) serves as cofactor.

The protein resides in the cell inner membrane. The protein localises to the cytoplasm. It carries out the reaction ATP + H2O + cellular proteinSide 1 = ADP + phosphate + cellular proteinSide 2.. In terms of biological role, part of the Sec protein translocase complex. Interacts with the SecYEG preprotein conducting channel. Has a central role in coupling the hydrolysis of ATP to the transfer of proteins into and across the cell membrane, serving as an ATP-driven molecular motor driving the stepwise translocation of polypeptide chains across the membrane. This is Protein translocase subunit SecA from Nitratidesulfovibrio vulgaris (strain DP4) (Desulfovibrio vulgaris).